The primary structure comprises 892 residues: Putative leucine-rich repeat receptor-like serine/threonine-protein kinase At2g04300 (892 aa).

Positions 1-26 (MKTHPQAILLCVLFFITFGLLHVVEA) are cleaved as a signal peptide. The Extracellular segment spans residues 27-523 (GNQEGFISLD…GAKKKNVVVL (497 aa)). N-linked (GlcNAc...) asparagine glycosylation is found at Asn99, Asn186, Asn241, Asn267, and Asn294. LRR repeat units lie at residues 375–396 (IKNI…PCVP), 399–422 (FMWD…FLNL), 423–444 (SSSH…LQNL), and 447–467 (SNNN…SLLV). 5 N-linked (GlcNAc...) asparagine glycosylation sites follow: Asn407, Asn421, Asn437, Asn450, and Asn469. The chain crosses the membrane as a helical span at residues 524–544 (VVVSIALVVVLGSALALFLVF). Residues 545-892 (RKRKTPRNEV…FGTEYTPEAR (348 aa)) are Cytoplasmic-facing. Residue Thr573 is modified to Phosphothreonine. The Protein kinase domain occupies 582-855 (NNFEKILGKG…QVVIELNECL (274 aa)). Residues 588-596 (LGKGGFGMV) and Lys610 contribute to the ATP site. Tyr655 carries the phosphotyrosine modification. The active-site Proton acceptor is the Asp707. 2 positions are modified to phosphothreonine: Thr742 and Thr747. Tyr755 bears the Phosphotyrosine mark.

This sequence belongs to the protein kinase superfamily. Ser/Thr protein kinase family.

The protein localises to the cell membrane. It catalyses the reaction L-seryl-[protein] + ATP = O-phospho-L-seryl-[protein] + ADP + H(+). The catalysed reaction is L-threonyl-[protein] + ATP = O-phospho-L-threonyl-[protein] + ADP + H(+). This is Putative leucine-rich repeat receptor-like serine/threonine-protein kinase At2g04300 from Arabidopsis thaliana (Mouse-ear cress).